The following is a 329-amino-acid chain: U5 small nuclear ribonucleoprotein TSSC4 (329 aa).

2 disordered regions span residues 1–88 and 104–156; these read MAEA…MSST and ARRA…PDYV. The span at 22–41 shows a compositional bias: low complexity; sequence DTLPSDTVSLSDSDSDLSLP. Phosphoserine is present on residues serine 60, serine 67, serine 86, serine 132, serine 143, and serine 146. Residues 77–104 form a hom2; mediates interaction with the U5 snRNP complexes and required for spliceosomal tri-snRNP complex assembly region; it reads VQPFHLRGMSSTFSQRSRDIFDCLEGAA. Positions 149–316 are interaction with SNRNP200; sequence VPPVPDYVAH…SRKRSRDHFR (168 aa). Residues 150-186 form a hom3; mediates interaction with the U5 snRNP complexes region; the sequence is PPVPDYVAHPERWTKYSLEDVTEVSEQSNQATALAFL. The interval 201 to 250 is hom4; necessary for interaction with the PRPF19 complex and required for spliceosomal tri-snRNP complex assembly; the sequence is FNQDPSSCGEGRVIFTKPVRGVEARHERKRVLGKVGEPGRGGLGNPATDR. Lysine 217 is modified (N6-acetyllysine). Residues 221-329 are disordered; that stretch reads GVEARHERKR…SSPEDPGAEV (109 aa). Serine 265 carries the post-translational modification Phosphoserine. Basic residues predominate over residues 306–317; the sequence is GSRKRSRDHFRN. Serine 321 is modified (phosphoserine).

The protein belongs to the TSSC4 family. In terms of assembly, interacts in a RNA-independent manner with distinct U5 snRNP-containing complexes, the mono-U5 snRNP and the post-splicing U5 snRNP-PRPF19 complex. Interacts with SNRNP200; the interaction is direct, excludes recruitment of C9ORF78 and WBP4 to SNRNP200 and negatively regulates its RNA helicase activity. Interacts with PRPF8; the interaction is direct. Expressed in fetal brain, lung, liver and kidney. Widely expressed in adult tissues.

Its subcellular location is the nucleus. It localises to the cytoplasm. Functionally, protein associated with the U5 snRNP, during its maturation and its post-splicing recycling and which is required for spliceosomal tri-snRNP complex assembly in the nucleus. Has a molecular sequestering activity and transiently hinders SNRNP200 binding sites for constitutive splicing factors that intervene later during the assembly of the spliceosome and splicing. Together with its molecular sequestering activity, may also function as a molecular adapter and placeholder, coordinating the assembly of the U5 snRNP and its association with the U4/U6 di-snRNP. This Homo sapiens (Human) protein is U5 small nuclear ribonucleoprotein TSSC4.